Reading from the N-terminus, the 206-residue chain is MTKRTSAKYKIDRRMGENIWGRPKSPVNKREYGPGQHGQRRKNKLSDFGTQLRAKQKLKGYYGDLTEKQFRKIFAEAERVKGDTGEMLVGLLERRLDAIVYRAKFVPTIFAARQFVNHGHVTVNGQRVNIGSYRCKEGDVIQVREKSRQLALVLEATQLAERDVPDYIEVDYSKMTATFVRTPGLGDVPYPVQMEPNLVVEFYAKN.

The segment at 15–46 (MGENIWGRPKSPVNKREYGPGQHGQRRKNKLS) is disordered. Residues 94-154 (RRLDAIVYRA…EKSRQLALVL (61 aa)) enclose the S4 RNA-binding domain.

It belongs to the universal ribosomal protein uS4 family. As to quaternary structure, part of the 30S ribosomal subunit. Contacts protein S5. The interaction surface between S4 and S5 is involved in control of translational fidelity.

In terms of biological role, one of the primary rRNA binding proteins, it binds directly to 16S rRNA where it nucleates assembly of the body of the 30S subunit. Functionally, with S5 and S12 plays an important role in translational accuracy. This chain is Small ribosomal subunit protein uS4, found in Cereibacter sphaeroides (strain ATCC 17029 / ATH 2.4.9) (Rhodobacter sphaeroides).